Consider the following 427-residue polypeptide: Gamma-glutamyl phosphate reductase (427 aa).

This sequence belongs to the gamma-glutamyl phosphate reductase family.

Its subcellular location is the cytoplasm. The enzyme catalyses L-glutamate 5-semialdehyde + phosphate + NADP(+) = L-glutamyl 5-phosphate + NADPH + H(+). The protein operates within amino-acid biosynthesis; L-proline biosynthesis; L-glutamate 5-semialdehyde from L-glutamate: step 2/2. Catalyzes the NADPH-dependent reduction of L-glutamate 5-phosphate into L-glutamate 5-semialdehyde and phosphate. The product spontaneously undergoes cyclization to form 1-pyrroline-5-carboxylate. The sequence is that of Gamma-glutamyl phosphate reductase from Rhizobium meliloti (strain 1021) (Ensifer meliloti).